A 265-amino-acid chain; its full sequence is Phosphatidylglycerol--prolipoprotein diacylglyceryl transferase (265 aa).

7 helical membrane-spanning segments follow: residues 17–37 (LAIRWYGLMYLAAFAQFIWLA), 59–79 (MLFYGVLGVIIGGRLGEVLFY), 94–114 (VWKGGMSFHGGFLGVLLAMSI), 123–143 (VLDVWDFIAPMVPLGYAFGRL), 177–197 (SPLYQALVDGLLMFILLWLFA), 204–224 (MAVGGMFALLYGSARFFTEYF), and 238–258 (ISAGQMLSVPLIVLGIVMLLI). Arginine 142 contributes to the a 1,2-diacyl-sn-glycero-3-phospho-(1'-sn-glycerol) binding site.

The protein belongs to the Lgt family.

It is found in the cell inner membrane. It catalyses the reaction L-cysteinyl-[prolipoprotein] + a 1,2-diacyl-sn-glycero-3-phospho-(1'-sn-glycerol) = an S-1,2-diacyl-sn-glyceryl-L-cysteinyl-[prolipoprotein] + sn-glycerol 1-phosphate + H(+). It functions in the pathway protein modification; lipoprotein biosynthesis (diacylglyceryl transfer). In terms of biological role, catalyzes the transfer of the diacylglyceryl group from phosphatidylglycerol to the sulfhydryl group of the N-terminal cysteine of a prolipoprotein, the first step in the formation of mature lipoproteins. This is Phosphatidylglycerol--prolipoprotein diacylglyceryl transferase from Janthinobacterium sp. (strain Marseille) (Minibacterium massiliensis).